The following is a 258-amino-acid chain: Cobalt-precorrin-4 C(11)-methyltransferase (258 aa).

This sequence belongs to the precorrin methyltransferase family. Homodimer.

It carries out the reaction Co-precorrin-4 + S-adenosyl-L-methionine = Co-precorrin-5A + S-adenosyl-L-homocysteine + H(+). The protein operates within cofactor biosynthesis; adenosylcobalamin biosynthesis; cob(II)yrinate a,c-diamide from sirohydrochlorin (anaerobic route): step 4/10. Functionally, catalyzes the methylation of C-11 in cobalt-precorrin-4 to form cobalt-precorrin-5A. This chain is Cobalt-precorrin-4 C(11)-methyltransferase (cbiF), found in Priestia megaterium (Bacillus megaterium).